A 339-amino-acid polypeptide reads, in one-letter code: WAT1-related protein At5g40210 (339 aa).

10 consecutive transmembrane segments (helical) span residues 11-31 (GWILTAMVVTEFSNVGVNTLV), 42-62 (FVVLVYSYTFGSLLLLPLTFF), 74-94 (FSILCNMGILGLIASAFQILG), 104-124 (TLSSAMSNVNPAFTFILAVVF), 140-160 (VLGTILSIIGALVVTLYHGPM), 168-188 (WIIGGGLLALQYILVSVSYLV), 200-220 (VVVTLVHNVCIAVVCAFVSLL), 233-253 (FDITLITVVATGILNSGYYVI), 266-286 (LSMFKPLSILIAAVSTFIFLG), and 289-309 (LYLGSVMGGILISIGFYMVLW). Residues 29–154 (TLVKAATSKG…LSIIGALVVT (126 aa)) form the EamA domain.

Belongs to the drug/metabolite transporter (DMT) superfamily. Plant drug/metabolite exporter (P-DME) (TC 2.A.7.4) family.

Its subcellular location is the membrane. The chain is WAT1-related protein At5g40210 from Arabidopsis thaliana (Mouse-ear cress).